The sequence spans 333 residues: Protein-methionine-sulfoxide reductase catalytic subunit MsrP (333 aa).

The segment at residues 1–43 (MHKHRKPTEADVTPESLFYQRRRVLKALGISAAALSLPLSAQA) is a signal peptide (tat-type signal). Residues N87, 90 to 91 (YE), C145, T180, N232, R237, and 248 to 250 (NIK) contribute to the Mo-molybdopterin site.

The protein belongs to the MsrP family. Heterodimer of a catalytic subunit (MsrP) and a heme-binding subunit (MsrQ). Requires Mo-molybdopterin as cofactor. Predicted to be exported by the Tat system. The position of the signal peptide cleavage has not been experimentally proven.

The protein localises to the periplasm. The catalysed reaction is L-methionyl-[protein] + a quinone + H2O = L-methionyl-(S)-S-oxide-[protein] + a quinol. The enzyme catalyses L-methionyl-[protein] + a quinone + H2O = L-methionyl-(R)-S-oxide-[protein] + a quinol. Functionally, part of the MsrPQ system that repairs oxidized periplasmic proteins containing methionine sulfoxide residues (Met-O), using respiratory chain electrons. Thus protects these proteins from oxidative-stress damage caused by reactive species of oxygen and chlorine generated by the host defense mechanisms. MsrPQ is essential for the maintenance of envelope integrity under bleach stress, rescuing a wide series of structurally unrelated periplasmic proteins from methionine oxidation. The catalytic subunit MsrP is non-stereospecific, being able to reduce both (R-) and (S-) diastereoisomers of methionine sulfoxide. The polypeptide is Protein-methionine-sulfoxide reductase catalytic subunit MsrP (Pectobacterium atrosepticum (strain SCRI 1043 / ATCC BAA-672) (Erwinia carotovora subsp. atroseptica)).